We begin with the raw amino-acid sequence, 349 residues long: Isopentenyl-diphosphate delta-isomerase (349 aa).

Substrate is bound at residue 6–7 (RK). FMN-binding positions include 62–64 (AMT), serine 93, and asparagine 122. Position 152 (glutamine 152) interacts with substrate. A Mg(2+)-binding site is contributed by glutamate 153. FMN is bound by residues lysine 184, threonine 214, 258-259 (GG), and 280-281 (AG).

It belongs to the IPP isomerase type 2 family. In terms of assembly, homooctamer. Dimer of tetramers. FMN is required as a cofactor. The cofactor is NADPH. Mg(2+) serves as cofactor.

It localises to the cytoplasm. The catalysed reaction is isopentenyl diphosphate = dimethylallyl diphosphate. In terms of biological role, involved in the biosynthesis of isoprenoids. Catalyzes the 1,3-allylic rearrangement of the homoallylic substrate isopentenyl (IPP) to its allylic isomer, dimethylallyl diphosphate (DMAPP). This chain is Isopentenyl-diphosphate delta-isomerase, found in Bacillus cereus (strain AH187).